The primary structure comprises 73 residues: DNA-directed RNA polymerase subunit Rpo10 (73 aa).

Zn(2+) contacts are provided by Cys7, Cys10, Cys44, and Cys45.

It belongs to the archaeal Rpo10/eukaryotic RPB10 RNA polymerase subunit family. As to quaternary structure, part of the RNA polymerase complex. Forms an Rpo3-Rpo10-Rpo11-Rpo12 complex upon coexpression. Zn(2+) serves as cofactor.

It is found in the cytoplasm. The catalysed reaction is RNA(n) + a ribonucleoside 5'-triphosphate = RNA(n+1) + diphosphate. Its function is as follows. DNA-dependent RNA polymerase (RNAP) catalyzes the transcription of DNA into RNA using the four ribonucleoside triphosphates as substrates. This is DNA-directed RNA polymerase subunit Rpo10 from Methanocaldococcus jannaschii (strain ATCC 43067 / DSM 2661 / JAL-1 / JCM 10045 / NBRC 100440) (Methanococcus jannaschii).